Consider the following 526-residue polypeptide: Light-independent protochlorophyllide reductase subunit B (526 aa).

Aspartate 36 contributes to the [4Fe-4S] cluster binding site. Residue aspartate 290 is the Proton donor of the active site. A substrate-binding site is contributed by 425-426; sequence GL.

The protein belongs to the ChlB/BchB/BchZ family. In terms of assembly, protochlorophyllide reductase is composed of three subunits; ChlL, ChlN and ChlB. Forms a heterotetramer of two ChlB and two ChlN subunits. [4Fe-4S] cluster is required as a cofactor.

It catalyses the reaction chlorophyllide a + oxidized 2[4Fe-4S]-[ferredoxin] + 2 ADP + 2 phosphate = protochlorophyllide a + reduced 2[4Fe-4S]-[ferredoxin] + 2 ATP + 2 H2O. Its pathway is porphyrin-containing compound metabolism; chlorophyll biosynthesis (light-independent). Component of the dark-operative protochlorophyllide reductase (DPOR) that uses Mg-ATP and reduced ferredoxin to reduce ring D of protochlorophyllide (Pchlide) to form chlorophyllide a (Chlide). This reaction is light-independent. The NB-protein (ChlN-ChlB) is the catalytic component of the complex. The protein is Light-independent protochlorophyllide reductase subunit B of Prochlorococcus marinus (strain MIT 9515).